The chain runs to 272 residues: Phosphatidylglycerol--prolipoprotein diacylglyceryl transferase (272 aa).

The next 4 helical transmembrane spans lie at 21–41 (IAVH…IFVA), 60–80 (YIWW…VLFY), 101–121 (GVYA…FIIA), and 131–151 (VSFW…YIFG). Arg-152 is an a 1,2-diacyl-sn-glycero-3-phospho-(1'-sn-glycerol) binding site. Helical transmembrane passes span 181–201 (PSQI…LAFY), 209–229 (GQLA…AEFF), and 244–264 (LTMG…FYVV).

It belongs to the Lgt family.

The protein localises to the cell inner membrane. It carries out the reaction L-cysteinyl-[prolipoprotein] + a 1,2-diacyl-sn-glycero-3-phospho-(1'-sn-glycerol) = an S-1,2-diacyl-sn-glyceryl-L-cysteinyl-[prolipoprotein] + sn-glycerol 1-phosphate + H(+). It participates in protein modification; lipoprotein biosynthesis (diacylglyceryl transfer). Its function is as follows. Catalyzes the transfer of the diacylglyceryl group from phosphatidylglycerol to the sulfhydryl group of the N-terminal cysteine of a prolipoprotein, the first step in the formation of mature lipoproteins. The sequence is that of Phosphatidylglycerol--prolipoprotein diacylglyceryl transferase from Aliarcobacter butzleri (strain RM4018) (Arcobacter butzleri).